Reading from the N-terminus, the 478-residue chain is MAAESTRNSSPPSTSQSSSPIINLPDDHLLTILLLLPVDSILSFSMTCKRYKSLACSDSLWEALCEREWGPTSVDALKLSSLRDGFSWMLMFQRVYKMDSVCCHKISDPDDDDEESSSFPIPRASHSLNFVNDHLVLFGGGCQGGRHLDDTWTSYVDKSNQSILKWKKVKSGTPSGRFGHTCIVIGEYLLLFGGINDRGERLNDTWIGQVFCHEGLSWKLLNVGSLQRPRPPPRGAHSACCIAEKKMVVHGGIGLNGVRLGDTWILELSEDFSSGTWHMVESPQLPPPRSGHTLTCIRENQVVLFGGRGLGYDVLDDVWILDIQEPCEEKWIQIFYDFQDVPEYASLPRVGHSATLVLGGRILIYGGEDSYRHRKDDFWVLDVKTIPSSGLKPQGLSLNGSSVWKKLDRISYGPKSRSFHRACADCSGRFLYVFGGMVDGLLQPAASSGLRFDGELFMVELVLGFSDLDHQQRPGKSM.

Positions Met-1–Pro-20 are disordered. Over residues Ser-9 to Pro-20 the composition is skewed to low complexity. Residues Ser-18–Leu-64 enclose the F-box domain. 2 Kelch repeats span residues Leu-135 to Glu-187 and Lys-246 to Glu-299.

The sequence is that of F-box/kelch-repeat protein At1g51550 from Arabidopsis thaliana (Mouse-ear cress).